Consider the following 194-residue polypeptide: MLNVLIFGAPGSGKGTQSEELIRRYGFRHISTGELLRAEIKAQTELGQAAAGYINEGHLVPDSLIVDMMEKLISTLVDTEGIIFDGFPRTIPQAEAMETMLAHHGWKVDIVLNLQVPEEMLIERLLNRGKISGRSDDNIETIRKRLDVYANETAPLVDFFTRKNVLHNVVGTGTIEEIALRIAPIVDKFRKVSN.

11–16 (GSGKGT) lines the ATP pocket. The NMP stretch occupies residues 31–60 (STGELLRAEIKAQTELGQAAAGYINEGHLV). AMP is bound by residues Thr32, Arg37, 58 to 60 (HLV), 86 to 89 (GFPR), and Gln93. Residues 127-137 (NRGKISGRSDD) form an LID region. Residue Arg128 coordinates ATP. 2 residues coordinate AMP: Arg134 and Arg145. Position 173 (Gly173) interacts with ATP.

Belongs to the adenylate kinase family. Monomer.

It localises to the cytoplasm. It carries out the reaction AMP + ATP = 2 ADP. It functions in the pathway purine metabolism; AMP biosynthesis via salvage pathway; AMP from ADP: step 1/1. Functionally, catalyzes the reversible transfer of the terminal phosphate group between ATP and AMP. Plays an important role in cellular energy homeostasis and in adenine nucleotide metabolism. The protein is Adenylate kinase of Porphyromonas gingivalis (strain ATCC 33277 / DSM 20709 / CIP 103683 / JCM 12257 / NCTC 11834 / 2561).